We begin with the raw amino-acid sequence, 75 residues long: Large ribosomal subunit protein bL31 (75 aa).

Belongs to the bacterial ribosomal protein bL31 family. Type A subfamily. In terms of assembly, part of the 50S ribosomal subunit.

Its function is as follows. Binds the 23S rRNA. This is Large ribosomal subunit protein bL31 from Chlorobium phaeobacteroides (strain BS1).